We begin with the raw amino-acid sequence, 228 residues long: Protein ULTRAPETALA 2 (228 aa).

The region spanning 14–121 (EELQEISGVH…NKALKNSNVS (108 aa)) is the SAND domain.

Expressed in influorescence, pollen and siliques, with a higher expression in influorescence.

The protein localises to the cytoplasm. It localises to the nucleus. In terms of biological role, putative transcription factor that acts as a key negative regulator of cell accumulation in shoot and floral meristems. Negatively regulates the size of the WUSCHEL (WUS)-expressing organizing center in inflorescence meristems. May act by down-regulating expression of WUS. Can compensate for mutant ULT1 protein when overexpressed. The sequence is that of Protein ULTRAPETALA 2 (ULT2) from Arabidopsis thaliana (Mouse-ear cress).